The following is a 69-amino-acid chain: Sperm protamine P1 (69 aa).

The disordered stretch occupies residues 1–69 (MARYRHSRSR…YSRRRRRRYY (69 aa)).

This sequence belongs to the protamine P1 family. In terms of tissue distribution, testis.

Its subcellular location is the nucleus. It is found in the chromosome. Protamines substitute for histones in the chromatin of sperm during the haploid phase of spermatogenesis. They compact sperm DNA into a highly condensed, stable and inactive complex. This is Sperm protamine P1 (PRM1) from Pseudochirops cupreus (Coppery ringtail).